The sequence spans 296 residues: 4-hydroxy-tetrahydrodipicolinate synthase (296 aa).

Residue Thr-50 participates in pyruvate binding. Tyr-138 (proton donor/acceptor) is an active-site residue. The active-site Schiff-base intermediate with substrate is Lys-166. Ile-208 is a binding site for pyruvate.

It belongs to the DapA family. As to quaternary structure, homotetramer; dimer of dimers.

The protein resides in the cytoplasm. The catalysed reaction is L-aspartate 4-semialdehyde + pyruvate = (2S,4S)-4-hydroxy-2,3,4,5-tetrahydrodipicolinate + H2O + H(+). It functions in the pathway amino-acid biosynthesis; L-lysine biosynthesis via DAP pathway; (S)-tetrahydrodipicolinate from L-aspartate: step 3/4. Catalyzes the condensation of (S)-aspartate-beta-semialdehyde [(S)-ASA] and pyruvate to 4-hydroxy-tetrahydrodipicolinate (HTPA). The polypeptide is 4-hydroxy-tetrahydrodipicolinate synthase (Thiobacillus denitrificans (strain ATCC 25259 / T1)).